Reading from the N-terminus, the 225-residue chain is Glutathione S-transferase U2 (225 aa).

Positions 6 to 85 (ESVKLLGFWI…YIDQTWNNNP (80 aa)) constitute a GST N-terminal domain. Glutathione-binding positions include 16 to 17 (SP), 42 to 43 (KK), 56 to 57 (KV), and 69 to 70 (ES). Positions 90-217 (DPYEKAMVRF…EKHIERMKKI (128 aa)) constitute a GST C-terminal domain. Thr151 carries the phosphothreonine modification.

This sequence belongs to the GST superfamily. Tau family.

The protein localises to the cytoplasm. It localises to the cytosol. It carries out the reaction RX + glutathione = an S-substituted glutathione + a halide anion + H(+). Functionally, may be involved in the conjugation of reduced glutathione to a wide number of exogenous and endogenous hydrophobic electrophiles and have a detoxification role against certain herbicides. The chain is Glutathione S-transferase U2 (GSTU2) from Arabidopsis thaliana (Mouse-ear cress).